The following is a 445-amino-acid chain: Anthranilate N-benzoyltransferase protein 1 (445 aa).

Active-site proton acceptor residues include H164 and D392.

Belongs to the plant acyltransferase family. Post-translationally, N-terminus is blocked.

The catalysed reaction is anthranilate + benzoyl-CoA = N-benzoylanthranilate + CoA. Its pathway is phytoalexin biosynthesis; methoxydianthramide B biosynthesis. In terms of biological role, catalyzes the formation of N-benzoylanthranilate, in the course of methoxydianthramide B, a phytoalexin. Phytoalexins are produced in response to infection by parasites, and are essential for the expression of disease resistance. The chain is Anthranilate N-benzoyltransferase protein 1 (HCBT1) from Dianthus caryophyllus (Carnation).